The primary structure comprises 307 residues: Ribonuclease Z (307 aa).

Positions 63, 65, 67, 68, 141, 212, and 270 each coordinate Zn(2+). Asp67 functions as the Proton acceptor in the catalytic mechanism.

This sequence belongs to the RNase Z family. As to quaternary structure, homodimer. Zn(2+) is required as a cofactor.

It carries out the reaction Endonucleolytic cleavage of RNA, removing extra 3' nucleotides from tRNA precursor, generating 3' termini of tRNAs. A 3'-hydroxy group is left at the tRNA terminus and a 5'-phosphoryl group is left at the trailer molecule.. In terms of biological role, zinc phosphodiesterase, which displays some tRNA 3'-processing endonuclease activity. Probably involved in tRNA maturation, by removing a 3'-trailer from precursor tRNA. The sequence is that of Ribonuclease Z from Bacillus cereus (strain G9842).